The primary structure comprises 224 residues: MEAYKKEFIEFMIECGVLTFGDFVTKSGRKTPFFVNTGNYKTGSQLKRLGEYYAEAIKANYKDDYNIVFGPAYKGIPLSVTVTMALSDKYGIDVSYCSNRKEVKDHGDTGILLGSKLNDGDKVLIVEDVTTSGKSIYETMPIIKEQGNVDVVGLVISVNRMEKGQGEKSALVELEEKYGFKSCAIVTMTEVVEYLYNKEVNGKVIINDEIKTRIDEYYKEYGAK.

Residues lysine 26, 73–74, arginine 100, lysine 101, lysine 104, histidine 106, and 127–135 contribute to the 5-phospho-alpha-D-ribose 1-diphosphate site; these read YK and EDVTTSGKS. 2 residues coordinate orotate: threonine 131 and arginine 160.

The protein belongs to the purine/pyrimidine phosphoribosyltransferase family. PyrE subfamily. In terms of assembly, homodimer. The cofactor is Mg(2+).

The catalysed reaction is orotidine 5'-phosphate + diphosphate = orotate + 5-phospho-alpha-D-ribose 1-diphosphate. It functions in the pathway pyrimidine metabolism; UMP biosynthesis via de novo pathway; UMP from orotate: step 1/2. In terms of biological role, catalyzes the transfer of a ribosyl phosphate group from 5-phosphoribose 1-diphosphate to orotate, leading to the formation of orotidine monophosphate (OMP). The polypeptide is Orotate phosphoribosyltransferase (Clostridium botulinum (strain Alaska E43 / Type E3)).